The sequence spans 508 residues: Light-independent protochlorophyllide reductase subunit B (508 aa).

Position 36 (D36) interacts with [4Fe-4S] cluster. D282 functions as the Proton donor in the catalytic mechanism. 417–418 (GL) provides a ligand contact to substrate.

Belongs to the ChlB/BchB/BchZ family. As to quaternary structure, protochlorophyllide reductase is composed of three subunits; BchL, BchN and BchB. Forms a heterotetramer of two BchB and two BchN subunits. [4Fe-4S] cluster is required as a cofactor.

It catalyses the reaction chlorophyllide a + oxidized 2[4Fe-4S]-[ferredoxin] + 2 ADP + 2 phosphate = protochlorophyllide a + reduced 2[4Fe-4S]-[ferredoxin] + 2 ATP + 2 H2O. It participates in porphyrin-containing compound metabolism; bacteriochlorophyll biosynthesis (light-independent). Its function is as follows. Component of the dark-operative protochlorophyllide reductase (DPOR) that uses Mg-ATP and reduced ferredoxin to reduce ring D of protochlorophyllide (Pchlide) to form chlorophyllide a (Chlide). This reaction is light-independent. The NB-protein (BchN-BchB) is the catalytic component of the complex. The sequence is that of Light-independent protochlorophyllide reductase subunit B from Methylocella silvestris (strain DSM 15510 / CIP 108128 / LMG 27833 / NCIMB 13906 / BL2).